The sequence spans 557 residues: 2-isopropylmalate synthase (557 aa).

Residues 33 to 307 form the Pyruvate carboxyltransferase domain; that stretch reads PIWCSSDLRD…DPQLDFSDID (275 aa). 4 residues coordinate Mg(2+): Asp-42, His-246, His-248, and Asn-282. The tract at residues 439–557 is regulatory domain; sequence ANAPYALVSH…SLSQQQAKAA (119 aa).

The protein belongs to the alpha-IPM synthase/homocitrate synthase family. LeuA type 2 subfamily. Homodimer. Requires Mg(2+) as cofactor.

Its subcellular location is the cytoplasm. The enzyme catalyses 3-methyl-2-oxobutanoate + acetyl-CoA + H2O = (2S)-2-isopropylmalate + CoA + H(+). It participates in amino-acid biosynthesis; L-leucine biosynthesis; L-leucine from 3-methyl-2-oxobutanoate: step 1/4. Its function is as follows. Catalyzes the condensation of the acetyl group of acetyl-CoA with 3-methyl-2-oxobutanoate (2-ketoisovalerate) to form 3-carboxy-3-hydroxy-4-methylpentanoate (2-isopropylmalate). This Pseudomonas entomophila (strain L48) protein is 2-isopropylmalate synthase.